The chain runs to 184 residues: Interferon alpha-3 (184 aa).

The signal sequence occupies residues 1–23 (MALPVSLLMALVVLSCHSSCSLG). Cystine bridges form between cysteine 24–cysteine 122 and cysteine 52–cysteine 162.

This sequence belongs to the alpha/beta interferon family.

The protein localises to the secreted. Its function is as follows. Produced by macrophages, IFN-alpha have antiviral activities. Interferon stimulates the production of two enzymes: a protein kinase and an oligoadenylate synthetase. This is Interferon alpha-3 from Equus caballus (Horse).